The primary structure comprises 248 residues: Pyridoxine 5'-phosphate synthase (248 aa).

Asparagine 12 provides a ligand contact to 3-amino-2-oxopropyl phosphate. 14–15 (DH) lines the 1-deoxy-D-xylulose 5-phosphate pocket. Arginine 23 provides a ligand contact to 3-amino-2-oxopropyl phosphate. Histidine 48 serves as the catalytic Proton acceptor. 2 residues coordinate 1-deoxy-D-xylulose 5-phosphate: arginine 50 and histidine 55. The Proton acceptor role is filled by glutamate 75. Threonine 105 contributes to the 1-deoxy-D-xylulose 5-phosphate binding site. Histidine 196 functions as the Proton donor in the catalytic mechanism. 3-amino-2-oxopropyl phosphate contacts are provided by residues glycine 197 and 218–219 (GH).

This sequence belongs to the PNP synthase family. In terms of assembly, homooctamer; tetramer of dimers.

The protein localises to the cytoplasm. It catalyses the reaction 3-amino-2-oxopropyl phosphate + 1-deoxy-D-xylulose 5-phosphate = pyridoxine 5'-phosphate + phosphate + 2 H2O + H(+). The protein operates within cofactor biosynthesis; pyridoxine 5'-phosphate biosynthesis; pyridoxine 5'-phosphate from D-erythrose 4-phosphate: step 5/5. Functionally, catalyzes the complicated ring closure reaction between the two acyclic compounds 1-deoxy-D-xylulose-5-phosphate (DXP) and 3-amino-2-oxopropyl phosphate (1-amino-acetone-3-phosphate or AAP) to form pyridoxine 5'-phosphate (PNP) and inorganic phosphate. This chain is Pyridoxine 5'-phosphate synthase, found in Stutzerimonas stutzeri (strain A1501) (Pseudomonas stutzeri).